The chain runs to 289 residues: MAAETASGYIQHHLQNLTYGQLPDGSWGFAHSAAEAKAMGFWAFHLDTLGWSVALGLIFLFIFRMAAKKATSGQPGGLQNFVEVMVDFVNGSVKDSFHGRSPVIAPLALTIFVWVFLMNAVDLVPVDWIPQLAILISGDPHIPFRAVSTTDPNATLAMAFCVFALIIFYSIKVKGLGGFIGELTLHPFGSKNIFVQILLIPVNFLLEFVTLIAKPISLALRLFGNMYAGELVFILIAVMFGSGLLWLSGLGVVLQWAWAVFHILIITLQAFIFMMLTIVYLSMAHEDNH.

6 consecutive transmembrane segments (helical) span residues 43–63 (AFHLDTLGWSVALGLIFLFIF), 103–123 (VIAPLALTIFVWVFLMNAVDL), 160–180 (FCVFALIIFYSIKVKGLGGFI), 193–213 (IFVQILLIPVNFLLEFVTLIA), 232–252 (VFILIAVMFGSGLLWLSGLGV), and 259–279 (AVFHILIITLQAFIFMMLTIV).

Belongs to the ATPase A chain family. F-type ATPases have 2 components, CF(1) - the catalytic core - and CF(0) - the membrane proton channel. CF(1) has five subunits: alpha(3), beta(3), gamma(1), delta(1), epsilon(1). CF(0) has three main subunits: a(1), b(2) and c(9-12). The alpha and beta chains form an alternating ring which encloses part of the gamma chain. CF(1) is attached to CF(0) by a central stalk formed by the gamma and epsilon chains, while a peripheral stalk is formed by the delta and b chains.

It localises to the cell inner membrane. Functionally, key component of the proton channel; it plays a direct role in the translocation of protons across the membrane. This is ATP synthase subunit a from Pseudomonas putida (strain GB-1).